Here is a 308-residue protein sequence, read N- to C-terminus: Putative S-adenosyl-L-methionine-dependent methyltransferase Mb3816c (308 aa).

Residues aspartate 131 and 160–161 (DL) each bind S-adenosyl-L-methionine.

This sequence belongs to the UPF0677 family.

Exhibits S-adenosyl-L-methionine-dependent methyltransferase activity. This chain is Putative S-adenosyl-L-methionine-dependent methyltransferase Mb3816c, found in Mycobacterium bovis (strain ATCC BAA-935 / AF2122/97).